Consider the following 20-residue polypeptide: Calreticulin (20 aa).

The protein belongs to the calreticulin family. In terms of processing, glycosylated.

The protein localises to the endoplasmic reticulum lumen. Functionally, molecular calcium-binding chaperone promoting folding, oligomeric assembly and quality control in the ER via the calreticulin/calnexin cycle. This lectin may interact transiently with almost all of the monoglucosylated glycoproteins that are synthesized in the ER. The sequence is that of Calreticulin from Spinacia oleracea (Spinach).